Here is a 577-residue protein sequence, read N- to C-terminus: Arginine--tRNA ligase (577 aa).

The short motif at 122 to 132 is the 'HIGH' region element; the sequence is PNVAKEMHVGH.

It belongs to the class-I aminoacyl-tRNA synthetase family. As to quaternary structure, monomer.

The protein resides in the cytoplasm. The enzyme catalyses tRNA(Arg) + L-arginine + ATP = L-arginyl-tRNA(Arg) + AMP + diphosphate. The sequence is that of Arginine--tRNA ligase from Haemophilus influenzae (strain PittGG).